We begin with the raw amino-acid sequence, 175 residues long: Endoribonuclease YbeY (175 aa).

3 residues coordinate Zn(2+): histidine 129, histidine 133, and histidine 139.

Belongs to the endoribonuclease YbeY family. Zn(2+) serves as cofactor.

It is found in the cytoplasm. Its function is as follows. Single strand-specific metallo-endoribonuclease involved in late-stage 70S ribosome quality control and in maturation of the 3' terminus of the 16S rRNA. The polypeptide is Endoribonuclease YbeY (Lactobacillus johnsonii (strain CNCM I-12250 / La1 / NCC 533)).